Consider the following 417-residue polypeptide: Serine hydroxymethyltransferase (417 aa).

Residues L122 and 126 to 128 contribute to the (6S)-5,6,7,8-tetrahydrofolate site; that span reads GHL. K230 carries the N6-(pyridoxal phosphate)lysine modification. 355 to 357 lines the (6S)-5,6,7,8-tetrahydrofolate pocket; the sequence is SPF.

The protein belongs to the SHMT family. Homodimer. Pyridoxal 5'-phosphate is required as a cofactor.

It is found in the cytoplasm. It carries out the reaction (6R)-5,10-methylene-5,6,7,8-tetrahydrofolate + glycine + H2O = (6S)-5,6,7,8-tetrahydrofolate + L-serine. Its pathway is one-carbon metabolism; tetrahydrofolate interconversion. It functions in the pathway amino-acid biosynthesis; glycine biosynthesis; glycine from L-serine: step 1/1. Functionally, catalyzes the reversible interconversion of serine and glycine with tetrahydrofolate (THF) serving as the one-carbon carrier. This reaction serves as the major source of one-carbon groups required for the biosynthesis of purines, thymidylate, methionine, and other important biomolecules. Also exhibits THF-independent aldolase activity toward beta-hydroxyamino acids, producing glycine and aldehydes, via a retro-aldol mechanism. This chain is Serine hydroxymethyltransferase, found in Francisella philomiragia subsp. philomiragia (strain ATCC 25017 / CCUG 19701 / FSC 153 / O#319-036).